A 564-amino-acid polypeptide reads, in one-letter code: Urease subunit alpha (564 aa).

Positions 126–564 (GGIDTHIHFI…LPMAQRYFLF (439 aa)) constitute a Urease domain. Positions 131, 133, and 214 each coordinate Ni(2+). Lysine 214 is modified (N6-carboxylysine). Position 216 (histidine 216) interacts with substrate. Ni(2+)-binding residues include histidine 243 and histidine 269. The active-site Proton donor is the histidine 317. A Ni(2+)-binding site is contributed by aspartate 357.

This sequence belongs to the metallo-dependent hydrolases superfamily. Urease alpha subunit family. In terms of assembly, heterotrimer of UreA (gamma), UreB (beta) and UreC (alpha) subunits. Three heterotrimers associate to form the active enzyme. The cofactor is Ni cation. In terms of processing, carboxylation allows a single lysine to coordinate two nickel ions.

It localises to the cytoplasm. It catalyses the reaction urea + 2 H2O + H(+) = hydrogencarbonate + 2 NH4(+). It functions in the pathway nitrogen metabolism; urea degradation; CO(2) and NH(3) from urea (urease route): step 1/1. In Burkholderia thailandensis (strain ATCC 700388 / DSM 13276 / CCUG 48851 / CIP 106301 / E264), this protein is Urease subunit alpha.